The primary structure comprises 89 residues: Phytosulfokines 1 (89 aa).

The signal sequence occupies residues 1 to 22 (MVNPGRTARALCLLCLALLLLG). Positions 23-79 (QDTHSRKLLLQEKHSHGVGNGTTTTQEPSRENGGSTGSNNNGQLQFDSAKWEEFHTD) are excised as a propeptide. Positions 33–68 (QEKHSHGVGNGTTTTQEPSRENGGSTGSNNNGQLQF) are disordered. N42 carries N-linked (GlcNAc...) asparagine glycosylation. Sulfotyrosine is present on residues Y80 and Y82. Residues 85-89 (DVKNP) constitute a propeptide that is removed on maturation.

It belongs to the phytosulfokine family. Post-translationally, sulfation is important for activity and for the binding to a putative membrane receptor. PSK-alpha is produced by endopeptidase digestion. PSK-beta is produced from PSK-alpha by exopeptidase digestion. Expressed throughout the seedling. More abundant in fragments containing shoot or root apexes where cells proliferate vigorously.

It is found in the secreted. In terms of biological role, promotes plant cell differentiation, organogenesis and somatic embryogenesis as well as cell proliferation. The protein is Phytosulfokines 1 (PSK1) of Oryza sativa subsp. indica (Rice).